A 182-amino-acid chain; its full sequence is MKIKTLAIVVLSALSLSSAAALADTTTVNGGTVHFKGEVVNAACAVDAGSVDQTVQLGQVRTASLKQAGANSSAVVFNIQLNDCDTTVATKAAVAFLGTAIGPTHTDVLALQSSAAGSATNVGVQILDRTGAGLALDGATFSSETTLNNGTNTIPFQARYFATGAATPGAANADATFKVQYQ.

An N-terminal signal peptide occupies residues 1–23 (MKIKTLAIVVLSALSLSSAAALA). Residues Cys-44 and Cys-84 are joined by a disulfide bond.

This sequence belongs to the fimbrial protein family.

Its subcellular location is the fimbrium. The polypeptide is Fimbrial subunit type 1 (Klebsiella pneumoniae).